The following is a 430-amino-acid chain: 3-phosphoshikimate 1-carboxyvinyltransferase (430 aa).

Positions 21, 22, and 26 each coordinate 3-phosphoshikimate. K21 lines the phosphoenolpyruvate pocket. Residues G92 and R120 each coordinate phosphoenolpyruvate. Positions 165, 166, 167, 193, 314, and 341 each coordinate 3-phosphoshikimate. Position 167 (Q167) interacts with phosphoenolpyruvate. D314 (proton acceptor) is an active-site residue. 3 residues coordinate phosphoenolpyruvate: R345, R386, and K411.

Belongs to the EPSP synthase family. As to quaternary structure, monomer.

It is found in the cytoplasm. It carries out the reaction 3-phosphoshikimate + phosphoenolpyruvate = 5-O-(1-carboxyvinyl)-3-phosphoshikimate + phosphate. It functions in the pathway metabolic intermediate biosynthesis; chorismate biosynthesis. In terms of biological role, catalyzes the transfer of the enolpyruvyl moiety of phosphoenolpyruvate (PEP) to the 5-hydroxyl of shikimate-3-phosphate (S3P) to produce enolpyruvyl shikimate-3-phosphate and inorganic phosphate. The protein is 3-phosphoshikimate 1-carboxyvinyltransferase of Methanospirillum hungatei JF-1 (strain ATCC 27890 / DSM 864 / NBRC 100397 / JF-1).